Reading from the N-terminus, the 432-residue chain is tRNA modification GTPase MnmE (432 aa).

3 residues coordinate (6S)-5-formyl-5,6,7,8-tetrahydrofolate: Arg23, Glu85, and Lys124. The region spanning 217-362 is the TrmE-type G domain; sequence GARLALIGAP…LKEAVREALL (146 aa). Asn227 lines the K(+) pocket. GTP contacts are provided by residues 227-232, 246-252, and 271-274; these read NAGKSS, SPIPGTT, and DTAG. Ser231 lines the Mg(2+) pocket. K(+)-binding residues include Ser246, Ile248, and Thr251. Thr252 serves as a coordination point for Mg(2+). Lys432 is a binding site for (6S)-5-formyl-5,6,7,8-tetrahydrofolate.

This sequence belongs to the TRAFAC class TrmE-Era-EngA-EngB-Septin-like GTPase superfamily. TrmE GTPase family. As to quaternary structure, homodimer. Heterotetramer of two MnmE and two MnmG subunits. K(+) is required as a cofactor.

It localises to the cytoplasm. Exhibits a very high intrinsic GTPase hydrolysis rate. Involved in the addition of a carboxymethylaminomethyl (cmnm) group at the wobble position (U34) of certain tRNAs, forming tRNA-cmnm(5)s(2)U34. The polypeptide is tRNA modification GTPase MnmE (Thermus thermophilus (strain ATCC 27634 / DSM 579 / HB8)).